The sequence spans 233 residues: Nuclear speckle RNA-binding protein A (233 aa).

3 disordered regions span residues 1–54 (MADG…VPDT), 68–92 (VQSG…GGNV), and 214–233 (FLRL…RGRR). Residues 71 to 91 (GEGGSVSMGRSGGGGGGGGGN) show a composition bias toward gly residues. The RRM domain maps to 136–222 (NTLYVEGLPS…KFLRLQFSRK (87 aa)).

In terms of tissue distribution, expressed in root meristems, lateral root primordia and root vascular tissues.

Its subcellular location is the nucleus speckle. Alternative splicing (AS) regulator that binds to specific mRNAs and modulates auxin effects on the transcriptome. Displaced from its targets upon binding to AS competitor long non-coding RNA (ASCO-RNA). The polypeptide is Nuclear speckle RNA-binding protein A (Arabidopsis thaliana (Mouse-ear cress)).